Reading from the N-terminus, the 286-residue chain is MRVLRTVAAVRSAVEGWRASHERVALVPTMGNLHRGHLALVERAAQLADRVIVSIFVNPLQFNDRDDYSRYPRTFEKDQQYLDEYGVAVVFAPSLEDIYPQRLENVTHVEVPGLSDILEGASRLGHFRGVTTVVAVLFNIIQPQVAVFGEKDYQQLLIIRRMVADLLMPVEVESIATVRDKDGLALSSRNSYLTKEERARAPILFGALSHAAETIKEGWRNFSILEEEGRQRLVTAGFCPDYFHIRRAEDLAEPGGRENNLVVLAAAYLGKARLIDNMQVQLKSVD.

30–37 (MGNLHRGH) contributes to the ATP binding site. The Proton donor role is filled by His37. Gln61 provides a ligand contact to (R)-pantoate. Gln61 is a binding site for beta-alanine. Residue 149-152 (GEKD) coordinates ATP. Residue Gln155 coordinates (R)-pantoate. Residues Val178 and 186 to 189 (LSSR) each bind ATP.

Belongs to the pantothenate synthetase family. Homodimer.

It localises to the cytoplasm. The enzyme catalyses (R)-pantoate + beta-alanine + ATP = (R)-pantothenate + AMP + diphosphate + H(+). It functions in the pathway cofactor biosynthesis; (R)-pantothenate biosynthesis; (R)-pantothenate from (R)-pantoate and beta-alanine: step 1/1. Functionally, catalyzes the condensation of pantoate with beta-alanine in an ATP-dependent reaction via a pantoyl-adenylate intermediate. This chain is Pantothenate synthetase, found in Nitrosococcus oceani (strain ATCC 19707 / BCRC 17464 / JCM 30415 / NCIMB 11848 / C-107).